Reading from the N-terminus, the 599-residue chain is MKKSQKRISNVSEIKAQLKTVETKVHNGVFLFSGIMTIAELAQKINVSVNQIITYFFHQAKMYNLNHSLSEDEIAEICLEFGLDFKKEVQIDASNFMEEVSILDQDKDLSPRPPIITVMGHVDHGKTTLLDYIRKTNIAKNEKGGITQHTGAYQVVFQGHIINFIDTPGHEAFTQMRARGAKVTDIIVLVVAADDGVMPQTKEAINHAAAANVPIIVFVNKMDKPNKDVDRIKNELSALNIVTEEWGGSNIFVYGSALTGQGIDTLFSSILLLAEILELKANKNRYPIGTVIEAKLHHNKGTIATLMVQNGTLMVRDFIVAGYQYGRIRSLENTNGQPIKFAPPGTPVIVTGLNYVPEAGDKFFGFHEEKFAKQLALERKQSEKISKTKVQTKQQTKEKTLNIIIKADVAGIAQALHSTIEKLASKQVHIHILHSGVGIVNKADILLAQTSNSIIYAFNLQIPAAIKAQAKQAQVEIREHTIIYKIVDEIKKQVRGMREIRYELQQIGTAKIIAKFWFSKVGSIAGCSVLSGKFVENCKIELWRNSKLIHSGKIESLQRDKNPVKEVQVGNEFGTHIYKFNDIEIGDELKAFLDVEIEE.

Residues 111-278 form the tr-type G domain; the sequence is PRPPIITVMG…SILLLAEILE (168 aa). Residues 120–127 form a G1 region; sequence GHVDHGKT. 120–127 serves as a coordination point for GTP; that stretch reads GHVDHGKT. Positions 145-149 are G2; the sequence is GITQH. Positions 166-169 are G3; sequence DTPG. GTP contacts are provided by residues 166–170 and 220–223; these read DTPGH and NKMD. The G4 stretch occupies residues 220–223; sequence NKMD. Positions 256–258 are G5; the sequence is SAL.

The protein belongs to the TRAFAC class translation factor GTPase superfamily. Classic translation factor GTPase family. IF-2 subfamily.

The protein resides in the cytoplasm. In terms of biological role, one of the essential components for the initiation of protein synthesis. Protects formylmethionyl-tRNA from spontaneous hydrolysis and promotes its binding to the 30S ribosomal subunits. Also involved in the hydrolysis of GTP during the formation of the 70S ribosomal complex. The protein is Translation initiation factor IF-2 of Mesomycoplasma hyopneumoniae (strain 232) (Mycoplasma hyopneumoniae).